Consider the following 315-residue polypeptide: MNVVNVVPMHLPPPPPRPRGEQHVSVLGREVLAALSPVSEGVYVDATLGAGGHTATILETPGARVIGIDRDERALAIARARLARAGDRVTYVHGEFSEIERHLAALGVPQVDGLLADIGVSSMQLDDPGRGMSFRAEGPLDMRMDSSRGETALELIERLSDEELADLIYRYGEERRSRRVARCIKQAADSGELVTTLDLRRAVVRAVGPARIGGVDPATRTFQALRIAVNGELDQLEALLEAAPRIIAPGGVLAVISFHSLEDRIVKRALREPEVWEPLTKKPVTAGDDEVEGNPRARSAKLRAARRVGGAEALA.

Residues 1–21 (MNVVNVVPMHLPPPPPRPRGE) are disordered. S-adenosyl-L-methionine is bound by residues 51–53 (GGH), Asp-69, Phe-96, Asp-117, and Gln-124. Residues 281–315 (KKPVTAGDDEVEGNPRARSAKLRAARRVGGAEALA) form a disordered region.

It belongs to the methyltransferase superfamily. RsmH family.

It localises to the cytoplasm. The catalysed reaction is cytidine(1402) in 16S rRNA + S-adenosyl-L-methionine = N(4)-methylcytidine(1402) in 16S rRNA + S-adenosyl-L-homocysteine + H(+). Specifically methylates the N4 position of cytidine in position 1402 (C1402) of 16S rRNA. The chain is Ribosomal RNA small subunit methyltransferase H from Sorangium cellulosum (strain So ce56) (Polyangium cellulosum (strain So ce56)).